The chain runs to 1182 residues: CRISPR-associated endoribonuclease Cas13a (1182 aa).

Residues 132–279 (FNNLIEKVQN…ENNSDNKLKQ (148 aa)) are a coiled coil. The HEPN-like fold 1 stretch occupies residues 366 to 508 (YIKNTGQLET…NNEEIKGYFI (143 aa)). A coiled-coil region spans residues 896–955 (KVEKENIEDYNKKEEIEQKKKSNIEKLQDLKVELHKKWEQNKITEKEIEKYNNTTRKINE). The tract at residues 965–1120 (LQNVYLLHEM…QNHILKSTKT (156 aa)) is HEPN-like fold 2.

It belongs to the CRISPR-associated endoribonuclease Cas13a family. A divalent metal cation is required as a cofactor.

With respect to regulation, target RNA acts as an activator for non-specific ssRNA degradation. Its function is as follows. CRISPR (clustered regularly interspaced short palindromic repeat), is an adaptive immune system that provides protection against mobile genetic elements (viruses, transposable elements and conjugative plasmids). CRISPR clusters contain sequences complementary to antecedent mobile elements and target invading nucleic acids. Unlike many single-component effectors, this CRISPR-Cas system targets RNA. CRISPR clusters are transcribed from pre-CRISPR RNA (crRNA) and processed into crRNA by this protein. Cleaves linear target ssRNA in a pre-crRNA-dependent fashion, preferentially before U residues. Binding a viable target RNA target activates this protein for non-specific RNA degradation in vitro (called collateral RNA degradation), which is fairly sensitive as it requires picomolar levels of viable target RNA. The chain is CRISPR-associated endoribonuclease Cas13a from Leptotrichia wadei (strain F0279).